Reading from the N-terminus, the 61-residue chain is Probradykinin-1 (61 aa).

The N-terminal stretch at 1 to 22 (MSFLKKSLFLVLFLGLVSFSIC) is a signal peptide. A propeptide spanning residues 23–48 (EEEKRETEEEENKDETEEQSEEKKRF) is cleaved from the precursor. The disordered stretch occupies residues 24 to 61 (EEKRETEEEENKDETEEQSEEKKRFEPVPPGFTPFRLT). The segment covering 30 to 42 (EEEENKDETEEQS) has biased composition (acidic residues).

It belongs to the frog skin active peptide (FSAP) family. Bradykinin-related peptide subfamily. In terms of tissue distribution, expressed by the skin glands.

It localises to the secreted. May produce in vitro relaxation of rat arterial smooth muscle and constriction of intestinal smooth muscle. May target bradykinin receptors (BDKRB). The polypeptide is Probradykinin-1 (Pithecopus azureus (Orange-legged monkey tree frog)).